Consider the following 300-residue polypeptide: Probable ABC transporter permease protein YurM (300 aa).

Helical transmembrane passes span 37 to 57, 98 to 118, 129 to 149, 161 to 181, 204 to 224, and 264 to 284; these read VWVF…WMVM, VIVT…AAYG, FFLV…LVPL, TYWA…IILI, FGVF…TSGI, and WGVL…LFLL. One can recognise an ABC transmembrane type-1 domain in the interval 94–285; sequence FMNSVIVTAL…APIIILFLLM (192 aa).

Belongs to the binding-protein-dependent transport system permease family. MalFG subfamily.

The protein localises to the cell membrane. Its function is as follows. Probably part of the binding-protein-dependent transport system YurMNO. Probably responsible for the translocation of the substrate across the membrane. The protein is Probable ABC transporter permease protein YurM (yurM) of Bacillus subtilis (strain 168).